The chain runs to 116 residues: Fluoride-specific ion channel FluC 1 (116 aa).

Helical transmembrane passes span 1-21, 32-52, 54-74, and 93-113; these read MYAP…RYLV, FPLG…WLAG, GAAD…FTTF, and VVVY…LGYH. The Na(+) site is built by Gly69 and Thr72.

It belongs to the fluoride channel Fluc/FEX (TC 1.A.43) family.

It is found in the cell membrane. The enzyme catalyses fluoride(in) = fluoride(out). With respect to regulation, na(+) is not transported, but it plays an essential structural role and its presence is essential for fluoride channel function. Its function is as follows. Fluoride-specific ion channel. Important for reducing fluoride concentration in the cell, thus reducing its toxicity. The chain is Fluoride-specific ion channel FluC 1 from Geobacillus kaustophilus (strain HTA426).